We begin with the raw amino-acid sequence, 496 residues long: Glycylpeptide N-tetradecanoyltransferase 1 (496 aa).

The segment at 1-82 is disordered; that stretch reads MADESETAVK…STQDQPVKMT (82 aa). Ser31 and Ser47 each carry phosphoserine. Positions 55 to 66 are enriched in basic residues; the sequence is KKKKKKQKKKKE. Phosphoserine is present on Ser83. Residues Gln118, Phe119, Trp120, Phe247, Leu248, Cys249, Val250, Ser256, Arg258, Val259, and Ala260 each coordinate tetradecanoyl-CoA.

It belongs to the NMT family. As to expression, ubiquitous.

It is found in the cytoplasm. It localises to the cytosol. The protein localises to the membrane. The enzyme catalyses N-terminal glycyl-[protein] + tetradecanoyl-CoA = N-tetradecanoylglycyl-[protein] + CoA + H(+). It catalyses the reaction N-terminal glycyl-L-lysyl-[protein] + tetradecanoyl-CoA = N-terminal glycyl-(N(6)-tetradecanoyl)-L-lysyl-[protein] + CoA + H(+). Adds a myristoyl group to the N-terminal glycine residue of certain cellular and viral proteins. Also able to mediate N-terminal lysine myristoylation of proteins: catalyzes myristoylation of ARF6 on both 'Gly-2' and 'Lys-3'. Lysine myristoylation is required to maintain ARF6 on membranes during the GTPase cycle. Required for normal embryogenesis. The chain is Glycylpeptide N-tetradecanoyltransferase 1 from Mus musculus (Mouse).